The chain runs to 741 residues: Lamin-B receptor (741 aa).

Residues 29–126 (RLRRPRRTED…TGSGSGSSLP (98 aa)) form a disordered region. 2 stretches are compositionally biased toward low complexity: residues 57 to 84 (TRRTGSVTAAGATATATATAGPATRTRA) and 109 to 126 (PRSSVGPLTGSGSGSSLP). Ser-111 is subject to Phosphoserine. Position 135 is a phosphothreonine (Thr-135). Ser-144 carries the post-translational modification Phosphoserine. Residues 160-184 (TNTSSGAPNKAFNTSSVNSGNSFSR) show a composition bias toward polar residues. A disordered region spans residues 160–194 (TNTSSGAPNKAFNTSSVNSGNSFSRTTTSSTTTTT). Positions 185–194 (TTTSSTTTTT) are enriched in low complexity. Phosphoserine occurs at positions 223 and 225. Residues 231–240 (LAGTPVTNTE) show a composition bias toward polar residues. The interval 231 to 277 (LAGTPVTNTEEGSRYSRSVSRSVYDDEKSSKRSYSTGEEDIDEEDEL) is disordered. Thr-234 and Thr-237 each carry phosphothreonine. Residues Ser-243, Ser-246, Ser-248, Ser-250, and Ser-263 each carry the phosphoserine modification. The residue at position 266 (Thr-266) is a Phosphothreonine. Positions 267–277 (GEEDIDEEDEL) are enriched in acidic residues. Ser-284 is modified (phosphoserine). Thr-288 is subject to Phosphothreonine. Ser-291 carries the post-translational modification Phosphoserine. Thr-293 bears the Phosphothreonine mark. Ser-298 is modified (phosphoserine). Helical transmembrane passes span 308 to 328 (FGGWLGAFLFLLLLPTAVYYL), 363 to 383 (VVGAFAAYQVVVFLLVALLPG), 402 to 422 (LTLLIASGVAEYLKYPVVTFV), 429 to 449 (FCIFGLVGAFVAAAWSYWLVD), 497 to 517 (LSLVTTLIYATCYIYQTLVWP), 543 to 563 (PATLFSASCLLFYVLDAIIFE), 577 to 599 (YGCLLLLRYAATPYLLTAVTKYF), and 604 to 624 (VPISCWYAPLAVAALLSLGLL). Residues Ser-640 and Ser-642 each carry the phosphoserine modification. Residues 687-707 (MALRPAWPPVLGLSLIILLLL) form a helical membrane-spanning segment.

Belongs to the ERG4/ERG24 family. Interacts directly with LAM.

Its subcellular location is the nucleus inner membrane. Functionally, anchors the lamina and the heterochromatin to the inner nuclear membrane. This is Lamin-B receptor from Drosophila melanogaster (Fruit fly).